A 91-amino-acid chain; its full sequence is Probable Fe(2+)-trafficking protein (91 aa).

Belongs to the Fe(2+)-trafficking protein family.

Functionally, could be a mediator in iron transactions between iron acquisition and iron-requiring processes, such as synthesis and/or repair of Fe-S clusters in biosynthetic enzymes. The sequence is that of Probable Fe(2+)-trafficking protein from Xanthomonas euvesicatoria pv. vesicatoria (strain 85-10) (Xanthomonas campestris pv. vesicatoria).